The chain runs to 187 residues: MAMEGKSRRFAVACGVLSQYVRAEQKMAAAAGAAPARAVTTLSLMPGAEVVVEEEERREVGEEEAGPATAPAAPLTIFYGGRMVVFEDFPADKAAEVMRMASSGMAAAPAQREGAALADMPIMRKASLQRFFAKRKDRLAATTPYARPSPAETKASEPEEKKTPTSWLDLAASASAAARRDSLTIAL.

A Tify domain is found at 68 to 103 (ATAPAAPLTIFYGGRMVVFEDFPADKAAEVMRMASS). A Jas motif is present at residues 121-145 (PIMRKASLQRFFAKRKDRLAATTPY). The Nuclear localization signal motif lies at 123-130 (MRKASLQR). The interval 139-168 (LAATTPYARPSPAETKASEPEEKKTPTSWL) is disordered. The segment covering 154 to 163 (KASEPEEKKT) has biased composition (basic and acidic residues).

It belongs to the TIFY/JAZ family. Interacts with COI1B in a coronatine-dependent manner. Coronatine is an analog of jasmonoyl isoleucine (JA-Ile). Ubiquitinated. Targeted for degradation by the SCF(COI1) E3 ubiquitin ligase-proteasome pathway during jasmonate signaling.

It is found in the nucleus. Its function is as follows. Repressor of jasmonate responses. This is Protein TIFY 11b from Oryza sativa subsp. japonica (Rice).